Reading from the N-terminus, the 288-residue chain is Proteasome subunit beta (288 aa).

A propeptide spans 1–57 (MTAGDPMRLHPGHALSSFTEHLRALAPELLGPNRFAALDGATGSSGGTGAKDIAPHG) (removed in mature form; by autocatalysis). Thr58 functions as the Nucleophile in the catalytic mechanism.

Belongs to the peptidase T1B family. As to quaternary structure, the 20S proteasome core is composed of 14 alpha and 14 beta subunits that assemble into four stacked heptameric rings, resulting in a barrel-shaped structure. The two inner rings, each composed of seven catalytic beta subunits, are sandwiched by two outer rings, each composed of seven alpha subunits. The catalytic chamber with the active sites is on the inside of the barrel. Has a gated structure, the ends of the cylinder being occluded by the N-termini of the alpha-subunits. Is capped by the proteasome-associated ATPase, ARC.

It is found in the cytoplasm. The catalysed reaction is Cleavage of peptide bonds with very broad specificity.. The protein operates within protein degradation; proteasomal Pup-dependent pathway. The formation of the proteasomal ATPase ARC-20S proteasome complex, likely via the docking of the C-termini of ARC into the intersubunit pockets in the alpha-rings, may trigger opening of the gate for substrate entry. Interconversion between the open-gate and close-gate conformations leads to a dynamic regulation of the 20S proteasome proteolysis activity. Functionally, component of the proteasome core, a large protease complex with broad specificity involved in protein degradation. This Nocardia farcinica (strain IFM 10152) protein is Proteasome subunit beta.